The sequence spans 304 residues: Probable WRKY transcription factor 29 (304 aa).

Disordered stretches follow at residues 76 to 96 and 185 to 236; these read LPED…GCLL and YTNE…IPSA. The segment covering 78 to 88 has biased composition (basic and acidic residues); that stretch reads EDSKPFRDDKK. Positions 128–194 form a DNA-binding region, WRKY; sequence KEENLLSDAW…YTNEHNHELP (67 aa). Composition is skewed to polar residues over residues 196–213 and 225–236; these read RRNS…QPKP and SSPTSNPMIPSA.

It belongs to the WRKY group II-e family.

It localises to the nucleus. Functionally, transcription factor involved in the expression of defense genes in innate immune response of plants. Interacts specifically with the W box (5'-(T)TGAC[CT]-3'), a frequently occurring elicitor-responsive cis-acting element. Activates WRKY 22, SIRK and its own promoters. The chain is Probable WRKY transcription factor 29 (WRKY29) from Arabidopsis thaliana (Mouse-ear cress).